Reading from the N-terminus, the 360-residue chain is Peptide chain release factor 1 (360 aa).

N5-methylglutamine is present on Gln235. The segment covering 291–308 has biased composition (basic and acidic residues); sequence ASERRNLLGTGDRSDRNR. The interval 291-312 is disordered; it reads ASERRNLLGTGDRSDRNRTYNF.

Belongs to the prokaryotic/mitochondrial release factor family. In terms of processing, methylated by PrmC. Methylation increases the termination efficiency of RF1.

It is found in the cytoplasm. Its function is as follows. Peptide chain release factor 1 directs the termination of translation in response to the peptide chain termination codons UAG and UAA. This Yersinia pseudotuberculosis serotype I (strain IP32953) protein is Peptide chain release factor 1.